The following is a 248-amino-acid chain: Ubiquinone biosynthesis O-methyltransferase (248 aa).

S-adenosyl-L-methionine-binding residues include Arg-40, Gly-71, Asp-92, and Met-135.

Belongs to the methyltransferase superfamily. UbiG/COQ3 family.

It catalyses the reaction a 3-demethylubiquinol + S-adenosyl-L-methionine = a ubiquinol + S-adenosyl-L-homocysteine + H(+). The catalysed reaction is a 3-(all-trans-polyprenyl)benzene-1,2-diol + S-adenosyl-L-methionine = a 2-methoxy-6-(all-trans-polyprenyl)phenol + S-adenosyl-L-homocysteine + H(+). It participates in cofactor biosynthesis; ubiquinone biosynthesis. In terms of biological role, O-methyltransferase that catalyzes the 2 O-methylation steps in the ubiquinone biosynthetic pathway. The chain is Ubiquinone biosynthesis O-methyltransferase from Dinoroseobacter shibae (strain DSM 16493 / NCIMB 14021 / DFL 12).